Here is a 310-residue protein sequence, read N- to C-terminus: Methionyl-tRNA formyltransferase (310 aa).

(6S)-5,6,7,8-tetrahydrofolate is bound at residue 110-113; sequence SVLP.

It belongs to the Fmt family.

The enzyme catalyses L-methionyl-tRNA(fMet) + (6R)-10-formyltetrahydrofolate = N-formyl-L-methionyl-tRNA(fMet) + (6S)-5,6,7,8-tetrahydrofolate + H(+). Its function is as follows. Attaches a formyl group to the free amino group of methionyl-tRNA(fMet). The formyl group appears to play a dual role in the initiator identity of N-formylmethionyl-tRNA by promoting its recognition by IF2 and preventing the misappropriation of this tRNA by the elongation apparatus. The polypeptide is Methionyl-tRNA formyltransferase (Mycolicibacterium vanbaalenii (strain DSM 7251 / JCM 13017 / BCRC 16820 / KCTC 9966 / NRRL B-24157 / PYR-1) (Mycobacterium vanbaalenii)).